A 560-amino-acid polypeptide reads, in one-letter code: MFS-type transporter pgmG (560 aa).

A disordered region spans residues 1–32 (MSETVTQTETDQRPATARSLGAEEKEAKSDEQ). Residues 21–31 (GAEEKEAKSDE) are compositionally biased toward basic and acidic residues. Transmembrane regions (helical) follow at residues 45 to 65 (FIVIISILSSVTLYSLDNTIV), 84 to 104 (WLSVAFLVACVATNSIWSKIY), 111 to 131 (WLYLFCVVLFEVGSAMCGAAP), 141 to 161 (ALAGLGGAGLYVGVMTLLSVN), 174 to 194 (TGLTWGVGTVLGPIVGGGFAV), 201 to 221 (WSFYINLFFAAVAIPIYLFML), 242 to 262 (LGTILMIGACVSGVMAINFGG), and 275 to 295 (CFVVSGVLFIVFGLQQWYCIG). A glycan (N-linked (GlcNAc...) asparagine) is linked at Asn-300. A helical membrane pass occupies residues 313 to 333 (FIILFVQTASVATVFFVPIYF). N-linked (GlcNAc...) asparagine glycosylation occurs at Asn-343. The next 5 membrane-spanning stretches (helical) occupy residues 346 to 366 (AIDAGVRLLPLVCFIVAAMIL), 378 to 398 (MPWYLVGGCLSLVGSVLMYTI), 409 to 429 (GYMIILGVGGGMYAQASFAVA), 440 to 460 (VATGFISLAQLTGGTIALAIA), and 515 to 535 (ISQVYILPITGAAMSISLAIF).

This sequence belongs to the major facilitator superfamily. TCR/Tet family.

The protein resides in the membrane. Its function is as follows. MFS-type transporter; part of the gene cluster that mediates the biosynthesis of pleosporalin A, ascomycone A, as well as a third cryptic naphthoquinone derived pigment, all responsible for the coloration of conidia. Seems not to be involved in pigment biosynthesis although its expression is regulated by the cluster-specific transcription factor pgmR. This Aspergillus terreus protein is MFS-type transporter pgmG.